Here is a 300-residue protein sequence, read N- to C-terminus: Ribosomal RNA small subunit methyltransferase H (300 aa).

S-adenosyl-L-methionine contacts are provided by residues glycine 35 to histidine 37, aspartate 55, phenylalanine 82, aspartate 100, and glutamine 107.

This sequence belongs to the methyltransferase superfamily. RsmH family.

The protein resides in the cytoplasm. The catalysed reaction is cytidine(1402) in 16S rRNA + S-adenosyl-L-methionine = N(4)-methylcytidine(1402) in 16S rRNA + S-adenosyl-L-homocysteine + H(+). Its function is as follows. Specifically methylates the N4 position of cytidine in position 1402 (C1402) of 16S rRNA. The chain is Ribosomal RNA small subunit methyltransferase H from Chlamydia trachomatis serovar L2 (strain ATCC VR-902B / DSM 19102 / 434/Bu).